The sequence spans 150 residues: 3-hydroxyacyl-[acyl-carrier-protein] dehydratase FabZ (150 aa).

His52 is an active-site residue.

Belongs to the thioester dehydratase family. FabZ subfamily.

It localises to the cytoplasm. The enzyme catalyses a (3R)-hydroxyacyl-[ACP] = a (2E)-enoyl-[ACP] + H2O. Functionally, involved in unsaturated fatty acids biosynthesis. Catalyzes the dehydration of short chain beta-hydroxyacyl-ACPs and long chain saturated and unsaturated beta-hydroxyacyl-ACPs. This is 3-hydroxyacyl-[acyl-carrier-protein] dehydratase FabZ from Cupriavidus metallidurans (strain ATCC 43123 / DSM 2839 / NBRC 102507 / CH34) (Ralstonia metallidurans).